A 445-amino-acid chain; its full sequence is UPF0210 protein SUB1511 (445 aa).

This sequence belongs to the UPF0210 family. Homodimer.

The chain is UPF0210 protein SUB1511 from Streptococcus uberis (strain ATCC BAA-854 / 0140J).